Reading from the N-terminus, the 57-residue chain is Large ribosomal subunit protein uL30 (57 aa).

The protein belongs to the universal ribosomal protein uL30 family. Part of the 50S ribosomal subunit.

The sequence is that of Large ribosomal subunit protein uL30 from Maridesulfovibrio salexigens (strain ATCC 14822 / DSM 2638 / NCIMB 8403 / VKM B-1763) (Desulfovibrio salexigens).